The primary structure comprises 322 residues: Phosphatidylserine decarboxylase proenzyme (322 aa).

Catalysis depends on charge relay system; for autoendoproteolytic cleavage activity residues D90, H147, and S254. Catalysis depends on S254, which acts as the Schiff-base intermediate with substrate; via pyruvic acid; for decarboxylase activity. A Pyruvic acid (Ser); by autocatalysis modification is found at S254. The segment at 293-322 is disordered; the sequence is PDAEPAPLPAEEIEAEHDASPLVDDKKDQV. Basic and acidic residues predominate over residues 308–322; that stretch reads EHDASPLVDDKKDQV.

This sequence belongs to the phosphatidylserine decarboxylase family. PSD-B subfamily. Prokaryotic type I sub-subfamily. In terms of assembly, heterodimer of a large membrane-associated beta subunit and a small pyruvoyl-containing alpha subunit. The cofactor is pyruvate. Post-translationally, is synthesized initially as an inactive proenzyme. Formation of the active enzyme involves a self-maturation process in which the active site pyruvoyl group is generated from an internal serine residue via an autocatalytic post-translational modification. Two non-identical subunits are generated from the proenzyme in this reaction, and the pyruvate is formed at the N-terminus of the alpha chain, which is derived from the carboxyl end of the proenzyme. The autoendoproteolytic cleavage occurs by a canonical serine protease mechanism, in which the side chain hydroxyl group of the serine supplies its oxygen atom to form the C-terminus of the beta chain, while the remainder of the serine residue undergoes an oxidative deamination to produce ammonia and the pyruvoyl prosthetic group on the alpha chain. During this reaction, the Ser that is part of the protease active site of the proenzyme becomes the pyruvoyl prosthetic group, which constitutes an essential element of the active site of the mature decarboxylase.

The protein resides in the cell membrane. It carries out the reaction a 1,2-diacyl-sn-glycero-3-phospho-L-serine + H(+) = a 1,2-diacyl-sn-glycero-3-phosphoethanolamine + CO2. It participates in phospholipid metabolism; phosphatidylethanolamine biosynthesis; phosphatidylethanolamine from CDP-diacylglycerol: step 2/2. Functionally, catalyzes the formation of phosphatidylethanolamine (PtdEtn) from phosphatidylserine (PtdSer). This is Phosphatidylserine decarboxylase proenzyme from Escherichia coli O9:H4 (strain HS).